A 52-amino-acid polypeptide reads, in one-letter code: Proteinase inhibitor PSI-1.2 (52 aa).

Cystine bridges form between Cys-3/Cys-32, Cys-7/Cys-28, Cys-16/Cys-38, and Cys-31/Cys-49.

Its function is as follows. Potent inhibitor of trypsin and a weaker inhibitor of chymotrypsin. It does not inhibit elastase and subtilisin DY. The sequence is that of Proteinase inhibitor PSI-1.2 from Capsicum annuum (Capsicum pepper).